The following is a 151-amino-acid chain: Large ribosomal subunit protein bL9 (151 aa).

It belongs to the bacterial ribosomal protein bL9 family.

Its function is as follows. Binds to the 23S rRNA. This is Large ribosomal subunit protein bL9 from Chlorobium phaeobacteroides (strain DSM 266 / SMG 266 / 2430).